Consider the following 514-residue polypeptide: 2,3-bisphosphoglycerate-independent phosphoglycerate mutase (514 aa).

Mn(2+)-binding residues include aspartate 14 and serine 64. Catalysis depends on serine 64, which acts as the Phosphoserine intermediate. Residues histidine 125, 155–156, arginine 187, arginine 193, 263–266, and lysine 336 each bind substrate; these read RD and RADR. Mn(2+) contacts are provided by aspartate 403, histidine 407, aspartate 444, histidine 445, and histidine 463.

It belongs to the BPG-independent phosphoglycerate mutase family. In terms of assembly, monomer. The cofactor is Mn(2+).

The enzyme catalyses (2R)-2-phosphoglycerate = (2R)-3-phosphoglycerate. It participates in carbohydrate degradation; glycolysis; pyruvate from D-glyceraldehyde 3-phosphate: step 3/5. In terms of biological role, catalyzes the interconversion of 2-phosphoglycerate and 3-phosphoglycerate. The chain is 2,3-bisphosphoglycerate-independent phosphoglycerate mutase from Shigella dysenteriae serotype 1 (strain Sd197).